Consider the following 774-residue polypeptide: Phosphoribosylformylglycinamidine synthase subunit PurL (774 aa).

The active site involves H51. Positions 54 and 93 each coordinate ATP. E95 contributes to the Mg(2+) binding site. Residues 96–99 (SHNH) and R118 each bind substrate. The active-site Proton acceptor is the H97. A Mg(2+)-binding site is contributed by D119. Q242 is a binding site for substrate. A Mg(2+)-binding site is contributed by D270. 314 to 316 (ESQ) is a binding site for substrate. ATP contacts are provided by D514 and G551. N552 serves as a coordination point for Mg(2+). S554 contacts substrate.

Belongs to the FGAMS family. As to quaternary structure, monomer. Part of the FGAM synthase complex composed of 1 PurL, 1 PurQ and 2 PurS subunits.

The protein localises to the cytoplasm. The enzyme catalyses N(2)-formyl-N(1)-(5-phospho-beta-D-ribosyl)glycinamide + L-glutamine + ATP + H2O = 2-formamido-N(1)-(5-O-phospho-beta-D-ribosyl)acetamidine + L-glutamate + ADP + phosphate + H(+). It participates in purine metabolism; IMP biosynthesis via de novo pathway; 5-amino-1-(5-phospho-D-ribosyl)imidazole from N(2)-formyl-N(1)-(5-phospho-D-ribosyl)glycinamide: step 1/2. Its function is as follows. Part of the phosphoribosylformylglycinamidine synthase complex involved in the purines biosynthetic pathway. Catalyzes the ATP-dependent conversion of formylglycinamide ribonucleotide (FGAR) and glutamine to yield formylglycinamidine ribonucleotide (FGAM) and glutamate. The FGAM synthase complex is composed of three subunits. PurQ produces an ammonia molecule by converting glutamine to glutamate. PurL transfers the ammonia molecule to FGAR to form FGAM in an ATP-dependent manner. PurS interacts with PurQ and PurL and is thought to assist in the transfer of the ammonia molecule from PurQ to PurL. This Gloeobacter violaceus (strain ATCC 29082 / PCC 7421) protein is Phosphoribosylformylglycinamidine synthase subunit PurL.